Consider the following 322-residue polypeptide: MSGERAKRFPLALEDLKREPRKPEGRVAERQAAGDAARQRLTAAAAVPAAASPIVPERRAPHGGVFAANPARAKQHAPAAPGAAKRAPQGGAKQGDRSAAPNVALSGALALTSERVRERMVERLRANGVADPRVLAAMSAVPRHMFVDPGLAAQAYEDAALPIGHQQTISKPSVVARMIELAAAGRALERVLEIGTGCGYQAAVLSRVARDVYSIERVKPLYERAKLNLRPLRVPNIRLHYGDGRVGLPAAAPFDAIVIAAAGLDVPRALLEQLAIGGRLVAPVGEQAGEQVLTLVERVAPAQWRESRLDRVFFVPLKSGVI.

The interval 1–101 (MSGERAKRFP…AKQGDRSAAP (101 aa)) is disordered. The segment covering 14–29 (EDLKREPRKPEGRVAE) has biased composition (basic and acidic residues). 2 stretches are compositionally biased toward low complexity: residues 33 to 51 (AGDA…PAAA) and 67 to 91 (AANP…PQGG). The active site involves Ser170.

The protein belongs to the methyltransferase superfamily. L-isoaspartyl/D-aspartyl protein methyltransferase family.

It is found in the cytoplasm. It carries out the reaction [protein]-L-isoaspartate + S-adenosyl-L-methionine = [protein]-L-isoaspartate alpha-methyl ester + S-adenosyl-L-homocysteine. Catalyzes the methyl esterification of L-isoaspartyl residues in peptides and proteins that result from spontaneous decomposition of normal L-aspartyl and L-asparaginyl residues. It plays a role in the repair and/or degradation of damaged proteins. This chain is Protein-L-isoaspartate O-methyltransferase, found in Burkholderia pseudomallei (strain 668).